Consider the following 490-residue polypeptide: Betaine aldehyde dehydrogenase (490 aa).

Residues isoleucine 27 and aspartate 93 each contribute to the K(+) site. 150–152 (GAW) contributes to the NAD(+) binding site. The Charge relay system role is filled by lysine 162. NAD(+) is bound at residue 176-179 (KPSE). Valine 180 serves as a coordination point for K(+). 230 to 233 (GTTT) is an NAD(+) binding site. Leucine 246 serves as a coordination point for K(+). Glutamate 252 (proton acceptor) is an active-site residue. The NAD(+) site is built by glycine 254, cysteine 286, and glutamate 387. Catalysis depends on cysteine 286, which acts as the Nucleophile. Cysteine 286 carries the post-translational modification Cysteine sulfenic acid (-SOH). 2 residues coordinate K(+): lysine 457 and glycine 460. Catalysis depends on glutamate 464, which acts as the Charge relay system.

This sequence belongs to the aldehyde dehydrogenase family. In terms of assembly, dimer of dimers. The cofactor is K(+).

The catalysed reaction is betaine aldehyde + NAD(+) + H2O = glycine betaine + NADH + 2 H(+). Its pathway is amine and polyamine biosynthesis; betaine biosynthesis via choline pathway; betaine from betaine aldehyde: step 1/1. Functionally, involved in the biosynthesis of the osmoprotectant glycine betaine. Catalyzes the irreversible oxidation of betaine aldehyde to the corresponding acid. The protein is Betaine aldehyde dehydrogenase of Pseudomonas putida (strain GB-1).